Here is a 929-residue protein sequence, read N- to C-terminus: Isoleucine--tRNA ligase (929 aa).

The 'HIGH' region signature appears at 58 to 68; that stretch reads PYANGDIHIGH. Residue glutamate 568 coordinates L-isoleucyl-5'-AMP. The 'KMSKS' region motif lies at 609-613; the sequence is KMSKS. Lysine 612 is a binding site for ATP. Zn(2+) is bound by residues cysteine 892, cysteine 895, cysteine 912, and cysteine 915.

The protein belongs to the class-I aminoacyl-tRNA synthetase family. IleS type 1 subfamily. In terms of assembly, monomer. Zn(2+) is required as a cofactor.

It localises to the cytoplasm. The enzyme catalyses tRNA(Ile) + L-isoleucine + ATP = L-isoleucyl-tRNA(Ile) + AMP + diphosphate. Its function is as follows. Catalyzes the attachment of isoleucine to tRNA(Ile). As IleRS can inadvertently accommodate and process structurally similar amino acids such as valine, to avoid such errors it has two additional distinct tRNA(Ile)-dependent editing activities. One activity is designated as 'pretransfer' editing and involves the hydrolysis of activated Val-AMP. The other activity is designated 'posttransfer' editing and involves deacylation of mischarged Val-tRNA(Ile). This Thiobacillus denitrificans (strain ATCC 25259 / T1) protein is Isoleucine--tRNA ligase.